We begin with the raw amino-acid sequence, 436 residues long: 3-ketoacyl-CoA thiolase (436 aa).

Cys-99 functions as the Acyl-thioester intermediate in the catalytic mechanism. Active-site proton acceptor residues include His-392 and Cys-422.

This sequence belongs to the thiolase-like superfamily. Thiolase family. As to quaternary structure, heterotetramer of two alpha chains (FadJ) and two beta chains (FadI).

The protein resides in the cytoplasm. It carries out the reaction an acyl-CoA + acetyl-CoA = a 3-oxoacyl-CoA + CoA. Its pathway is lipid metabolism; fatty acid beta-oxidation. Catalyzes the final step of fatty acid oxidation in which acetyl-CoA is released and the CoA ester of a fatty acid two carbons shorter is formed. The sequence is that of 3-ketoacyl-CoA thiolase from Shewanella frigidimarina (strain NCIMB 400).